Consider the following 285-residue polypeptide: 2-dehydro-3-deoxyphosphooctonate aldolase (285 aa).

The protein belongs to the KdsA family.

The protein resides in the cytoplasm. The enzyme catalyses D-arabinose 5-phosphate + phosphoenolpyruvate + H2O = 3-deoxy-alpha-D-manno-2-octulosonate-8-phosphate + phosphate. It participates in carbohydrate biosynthesis; 3-deoxy-D-manno-octulosonate biosynthesis; 3-deoxy-D-manno-octulosonate from D-ribulose 5-phosphate: step 2/3. The protein operates within bacterial outer membrane biogenesis; lipopolysaccharide biosynthesis. In Acinetobacter baumannii (strain SDF), this protein is 2-dehydro-3-deoxyphosphooctonate aldolase.